The chain runs to 350 residues: Legumin K (350 aa).

2 disordered regions span residues 37–86 (LGGN…GNSV) and 102–170 (EEDT…RKNG). Basic and acidic residues-rich tracts occupy residues 104-118 (DTAKRLRSPRDERSQ), 141-150 (EQSHSHSHRE), and 160-170 (EKQRSEERKNG). Residues 182–329 (ENIADAAGAD…AFGLRQRQVT (148 aa)) form the Cupin type-1 domain.

The protein belongs to the 11S seed storage protein (globulins) family. In terms of assembly, hexamer; each subunit is composed of an acidic and a basic chain derived from a single precursor and linked by a disulfide bond.

In terms of biological role, this protein found in the seeds of many leguminous and non-leguminous plants is the source of sulfur-containing amino acids in seed meals. This Pisum sativum (Garden pea) protein is Legumin K (LEGK).